Reading from the N-terminus, the 1653-residue chain is Cortactin-binding protein 2 (1653 aa).

Disordered stretches follow at residues Met-1–Ala-27, Lys-203–Glu-222, Gln-268–Thr-297, Glu-314–Val-339, and His-356–Asp-609. Positions Arg-119–Lys-276 form a coiled coil. The span at Gly-379 to Thr-389 shows a compositional bias: polar residues. Positions Ser-390 to Gly-408 are enriched in low complexity. 3 stretches are compositionally biased toward polar residues: residues Gly-444–Asp-470, Ala-478–Thr-490, and Thr-573–Gln-584. Arg-488 is modified (asymmetric dimethylarginine). 5 ANK repeats span residues Gly-700–Tyr-730, Asp-734–Ala-763, Asn-767–His-796, Gly-800–Val-829, and Asp-833–Gly-862. The tract at residues Ala-860–Val-892 is disordered. Residues Asn-866–Ser-883 are compositionally biased toward acidic residues. The ANK 6 repeat unit spans residues Glu-903 to Arg-933. A disordered region spans residues Glu-1441–Glu-1472. A Phosphoserine modification is found at Ser-1514. A disordered region spans residues Asp-1545 to Lys-1653. Polar residues-rich tracts occupy residues Phe-1549–Asn-1564 and Lys-1572–Lys-1589. Residues Ser-1614–Gln-1628 show a composition bias toward low complexity. The span at Ser-1635–Lys-1653 shows a compositional bias: basic and acidic residues.

Interacts with CTTN/cortactin SH3 domain. Interacts with STRN, STRN4/zinedin and MOB4/phocein; this interactions mediate the association with the STRIPAK core complex and may regulate dendritic spine distribution of the STRIPAK complex in hippocampal neurons. Activation of glutamate receptors weakens the interaction with STRN and STRN4.

Its subcellular location is the cytoplasm. The protein localises to the cell cortex. It is found in the cell projection. The protein resides in the dendritic spine. Regulates the dendritic spine distribution of CTTN/cortactin in hippocampal neurons, and thus controls dendritic spinogenesis and dendritic spine maintenance. Associates with the striatin-interacting phosphatase and kinase (STRIPAK) core complex to regulate dendritic spine distribution of the STRIPAK complex in hippocampal neurons. This chain is Cortactin-binding protein 2 (CTTNBP2), found in Eulemur macaco macaco (Black lemur).